Consider the following 328-residue polypeptide: tRNA uridine(34) hydroxylase (328 aa).

The 95-residue stretch at 130-224 folds into the Rhodanese domain; sequence LDEDTVVLDT…YGKDPEVQGE (95 aa). The Cysteine persulfide intermediate role is filled by Cys184.

This sequence belongs to the TrhO family.

The enzyme catalyses uridine(34) in tRNA + AH2 + O2 = 5-hydroxyuridine(34) in tRNA + A + H2O. Functionally, catalyzes oxygen-dependent 5-hydroxyuridine (ho5U) modification at position 34 in tRNAs. This Streptococcus pyogenes serotype M3 (strain SSI-1) protein is tRNA uridine(34) hydroxylase.